The following is a 316-amino-acid chain: Ribosomal RNA small subunit methyltransferase H (316 aa).

Residues 37–39 (GGH), Asp56, Phe83, Asp106, and His113 contribute to the S-adenosyl-L-methionine site. Residues 276–316 (PILPSEEETKENPASRSAKLRVLRKTKSADKKYKKENSKEE) form a disordered region. Residues 302-316 (KSADKKYKKENSKEE) show a composition bias toward basic and acidic residues.

This sequence belongs to the methyltransferase superfamily. RsmH family.

It is found in the cytoplasm. The enzyme catalyses cytidine(1402) in 16S rRNA + S-adenosyl-L-methionine = N(4)-methylcytidine(1402) in 16S rRNA + S-adenosyl-L-homocysteine + H(+). Its function is as follows. Specifically methylates the N4 position of cytidine in position 1402 (C1402) of 16S rRNA. The protein is Ribosomal RNA small subunit methyltransferase H of Leptospira borgpetersenii serovar Hardjo-bovis (strain JB197).